Consider the following 430-residue polypeptide: S-adenosylmethionine synthase (430 aa).

ATP is bound at residue histidine 14. Aspartate 16 provides a ligand contact to Mg(2+). Glutamate 42 contributes to the K(+) binding site. L-methionine-binding residues include glutamate 55 and glutamine 98. Positions 98-108 (QSADINRGVER) are flexible loop. ATP contacts are provided by residues 164–166 (DAK), 254–255 (KF), aspartate 263, 269–270 (RK), alanine 286, and lysine 290. L-methionine is bound at residue aspartate 263. Lysine 294 provides a ligand contact to L-methionine.

This sequence belongs to the AdoMet synthase family. In terms of assembly, homotetramer; dimer of dimers. The cofactor is Mg(2+). Requires K(+) as cofactor.

The protein resides in the cytoplasm. The catalysed reaction is L-methionine + ATP + H2O = S-adenosyl-L-methionine + phosphate + diphosphate. Its pathway is amino-acid biosynthesis; S-adenosyl-L-methionine biosynthesis; S-adenosyl-L-methionine from L-methionine: step 1/1. Catalyzes the formation of S-adenosylmethionine (AdoMet) from methionine and ATP. The overall synthetic reaction is composed of two sequential steps, AdoMet formation and the subsequent tripolyphosphate hydrolysis which occurs prior to release of AdoMet from the enzyme. The chain is S-adenosylmethionine synthase from Phocaeicola vulgatus (strain ATCC 8482 / DSM 1447 / JCM 5826 / CCUG 4940 / NBRC 14291 / NCTC 11154) (Bacteroides vulgatus).